A 327-amino-acid chain; its full sequence is Xylosidase/arabinosidase 43A (327 aa).

D12 acts as the Proton acceptor in catalysis. The active-site Proton donor is E228.

Belongs to the glycosyl hydrolase 43 family.

The protein resides in the secreted. It catalyses the reaction Hydrolysis of (1-&gt;4)-beta-D-xylans, to remove successive D-xylose residues from the non-reducing termini.. The catalysed reaction is Hydrolysis of terminal non-reducing alpha-L-arabinofuranoside residues in alpha-L-arabinosides.. Activity is inhibited by Ag(+), Li(+), Pb(2+), Cu(2+), Cr(3+), Co(3+), Fe(3+), Ni(2+), Mg(2+), Zn(2+), EDTA and SDS; but not by Mn(2+), Ca(2+) and beta-mercaptoethanol. Bifunctional beta-xylosidase/alpha-L-arabinosidases with a low level of xylanase activity. Is most active on 4-nitrophenyl beta-D-xylopyranoside (pNPX) (defined as 100%), moderate on p-nitrophenyl-alpha-L-arabinofuranoside (pNPA) (23.7%), and weak on beechwood xylan (15.9%) and birchwood xylan (15.2%). Is able to attack xylooligosacchardies with degrees of polymerisation of 2-5, releasing the amounts of reducing sugars in the order of xylopentose &gt; xylotetraose &gt; xylotriose &gt; xylobiose, i.e. the rate of xylose released from xylooligosacchardies increased with the chain length. No activity is detected in the presence of carboxymethyl cellulose-sodium (CMC-Na), sugar beet arabinan, AZCL-arabinan (debranched), 4-nitrophenyl a-D - galactopyranoside, 2-nitrophenyl beta-D-galactopyranoside, and 4-nitrophenyl alpha-D-glucopyranoside. The protein is Xylosidase/arabinosidase 43A of Humicola insolens (Soft-rot fungus).